A 134-amino-acid polypeptide reads, in one-letter code: Small ribosomal subunit protein uS11 (134 aa).

The protein belongs to the universal ribosomal protein uS11 family. In terms of assembly, part of the 30S ribosomal subunit. Interacts with proteins S7 and S18. Binds to IF-3.

Located on the platform of the 30S subunit, it bridges several disparate RNA helices of the 16S rRNA. Forms part of the Shine-Dalgarno cleft in the 70S ribosome. In Herminiimonas arsenicoxydans, this protein is Small ribosomal subunit protein uS11.